Consider the following 354-residue polypeptide: Homeobox protein Nkx-2.4 (354 aa).

The homeobox DNA-binding region spans 188–247 (RRKRRVLFSQAQVYELERRFKQQKYLSAPEREHLASMIHLTPTQVKIWFQNHRYKMKRQA). The disordered stretch occupies residues 245 to 329 (RQAKDKAAQQ…PALHGPGGGL (85 aa)). Residues 262 to 272 (GPPPPPPPPSP) show a composition bias toward pro residues. The span at 290–304 (GAGTPTPGQGGQQPQ) shows a compositional bias: low complexity.

This sequence belongs to the NK-2 homeobox family. As to expression, in the embryo it is detected in the posterior hypothalamus and later in the head. In the adult it is detected only in testis.

The protein resides in the nucleus. Probable transcription factor. In Mus musculus (Mouse), this protein is Homeobox protein Nkx-2.4 (Nkx2-4).